Here is a 275-residue protein sequence, read N- to C-terminus: Large ribosomal subunit protein uL2 (275 aa).

The span at 38–53 (NSKAGRNNNGRITTRH) shows a compositional bias: polar residues. Disordered regions lie at residues 38-59 (NSKA…GGHK) and 224-257 (AMNP…KGFR).

Belongs to the universal ribosomal protein uL2 family. In terms of assembly, part of the 50S ribosomal subunit. Forms a bridge to the 30S subunit in the 70S ribosome.

Functionally, one of the primary rRNA binding proteins. Required for association of the 30S and 50S subunits to form the 70S ribosome, for tRNA binding and peptide bond formation. It has been suggested to have peptidyltransferase activity; this is somewhat controversial. Makes several contacts with the 16S rRNA in the 70S ribosome. This is Large ribosomal subunit protein uL2 from Burkholderia thailandensis (strain ATCC 700388 / DSM 13276 / CCUG 48851 / CIP 106301 / E264).